The following is a 213-amino-acid chain: Octanoyltransferase (213 aa).

Residues 36–211 (TNTPDEIWLV…KFCQQLGFKL (176 aa)) enclose the BPL/LPL catalytic domain. Substrate contacts are provided by residues 75–82 (RGGQVTYH), 142–144 (SLG), and 155–157 (GLA). The Acyl-thioester intermediate role is filled by Cys173.

This sequence belongs to the LipB family.

Its subcellular location is the cytoplasm. It carries out the reaction octanoyl-[ACP] + L-lysyl-[protein] = N(6)-octanoyl-L-lysyl-[protein] + holo-[ACP] + H(+). It functions in the pathway protein modification; protein lipoylation via endogenous pathway; protein N(6)-(lipoyl)lysine from octanoyl-[acyl-carrier-protein]: step 1/2. Catalyzes the transfer of endogenously produced octanoic acid from octanoyl-acyl-carrier-protein onto the lipoyl domains of lipoate-dependent enzymes. Lipoyl-ACP can also act as a substrate although octanoyl-ACP is likely to be the physiological substrate. This Photorhabdus laumondii subsp. laumondii (strain DSM 15139 / CIP 105565 / TT01) (Photorhabdus luminescens subsp. laumondii) protein is Octanoyltransferase.